A 954-amino-acid polypeptide reads, in one-letter code: Glycine dehydrogenase (decarboxylating) (954 aa).

K704 is modified (N6-(pyridoxal phosphate)lysine).

The protein belongs to the GcvP family. In terms of assembly, the glycine cleavage system is composed of four proteins: P, T, L and H. It depends on pyridoxal 5'-phosphate as a cofactor.

The catalysed reaction is N(6)-[(R)-lipoyl]-L-lysyl-[glycine-cleavage complex H protein] + glycine + H(+) = N(6)-[(R)-S(8)-aminomethyldihydrolipoyl]-L-lysyl-[glycine-cleavage complex H protein] + CO2. The glycine cleavage system catalyzes the degradation of glycine. The P protein binds the alpha-amino group of glycine through its pyridoxal phosphate cofactor; CO(2) is released and the remaining methylamine moiety is then transferred to the lipoamide cofactor of the H protein. This chain is Glycine dehydrogenase (decarboxylating), found in Vibrio vulnificus (strain YJ016).